The sequence spans 84 residues: Large ribosomal subunit protein bL27 (84 aa).

It belongs to the bacterial ribosomal protein bL27 family.

The polypeptide is Large ribosomal subunit protein bL27 (Karelsulcia muelleri (strain GWSS) (Sulcia muelleri)).